A 225-amino-acid polypeptide reads, in one-letter code: MGQKVNPIGLRIGITRGWDSIWFSQSDYKKNLHEDIKIRKFVQNRFNNAGVVKVVIERFPEKINVNLHTAKPGIVIGQKGANIEAVKKILKTMTDKPVNLNIIEVKKPETVAQCIAESIALQIEQRQPFRRVMKQELRRAMRGGVEGIKILISGRLNGADMARRENYKEGRIPLHTLRAKIDLGFKEAKTTFGQIGVKVWTYSGDFIQSKEESEEDKYAVKRRTS.

One can recognise a KH type-2 domain in the interval 38–106; the sequence is IRKFVQNRFN…PVNLNIIEVK (69 aa).

The protein belongs to the universal ribosomal protein uS3 family. In terms of assembly, part of the 30S ribosomal subunit. Forms a tight complex with proteins S10 and S14.

Its function is as follows. Binds the lower part of the 30S subunit head. Binds mRNA in the 70S ribosome, positioning it for translation. This is Small ribosomal subunit protein uS3 from Leptospira interrogans serogroup Icterohaemorrhagiae serovar copenhageni (strain Fiocruz L1-130).